Here is a 102-residue protein sequence, read N- to C-terminus: Putative pterin-4-alpha-carbinolamine dehydratase (102 aa).

The protein belongs to the pterin-4-alpha-carbinolamine dehydratase family.

It carries out the reaction (4aS,6R)-4a-hydroxy-L-erythro-5,6,7,8-tetrahydrobiopterin = (6R)-L-erythro-6,7-dihydrobiopterin + H2O. The chain is Putative pterin-4-alpha-carbinolamine dehydratase from Burkholderia ambifaria (strain ATCC BAA-244 / DSM 16087 / CCUG 44356 / LMG 19182 / AMMD) (Burkholderia cepacia (strain AMMD)).